The following is a 345-amino-acid chain: Phosphoribosylformylglycinamidine cyclo-ligase (345 aa).

The protein belongs to the AIR synthase family.

It localises to the cytoplasm. It carries out the reaction 2-formamido-N(1)-(5-O-phospho-beta-D-ribosyl)acetamidine + ATP = 5-amino-1-(5-phospho-beta-D-ribosyl)imidazole + ADP + phosphate + H(+). It participates in purine metabolism; IMP biosynthesis via de novo pathway; 5-amino-1-(5-phospho-D-ribosyl)imidazole from N(2)-formyl-N(1)-(5-phospho-D-ribosyl)glycinamide: step 2/2. In Anaeromyxobacter dehalogenans (strain 2CP-C), this protein is Phosphoribosylformylglycinamidine cyclo-ligase.